Here is a 201-residue protein sequence, read N- to C-terminus: Holliday junction branch migration complex subunit RuvA (201 aa).

The segment at 1-63 is domain I; it reads MYDYIKGTVT…EDNISLFGFQ (63 aa). A domain II region spans residues 64–142; the sequence is TTEERYLFKK…DVVASEIVYV (79 aa). The flexible linker stretch occupies residues 143-153; the sequence is APENDMVAGLS. The tract at residues 153–201 is domain III; it reads SPQLEEAVLALEALGYSTRELKKVIPKLAKEEDLTSDAYIKLALQLMTK.

It belongs to the RuvA family. In terms of assembly, homotetramer. Forms an RuvA(8)-RuvB(12)-Holliday junction (HJ) complex. HJ DNA is sandwiched between 2 RuvA tetramers; dsDNA enters through RuvA and exits via RuvB. An RuvB hexamer assembles on each DNA strand where it exits the tetramer. Each RuvB hexamer is contacted by two RuvA subunits (via domain III) on 2 adjacent RuvB subunits; this complex drives branch migration. In the full resolvosome a probable DNA-RuvA(4)-RuvB(12)-RuvC(2) complex forms which resolves the HJ.

The protein localises to the cytoplasm. The RuvA-RuvB-RuvC complex processes Holliday junction (HJ) DNA during genetic recombination and DNA repair, while the RuvA-RuvB complex plays an important role in the rescue of blocked DNA replication forks via replication fork reversal (RFR). RuvA specifically binds to HJ cruciform DNA, conferring on it an open structure. The RuvB hexamer acts as an ATP-dependent pump, pulling dsDNA into and through the RuvAB complex. HJ branch migration allows RuvC to scan DNA until it finds its consensus sequence, where it cleaves and resolves the cruciform DNA. This is Holliday junction branch migration complex subunit RuvA from Listeria monocytogenes serotype 4a (strain HCC23).